A 727-amino-acid polypeptide reads, in one-letter code: Malate synthase G (727 aa).

Acetyl-CoA contacts are provided by residues Val117, 124 to 125, Ser275, and Arg312; that span reads RY. Arg339 functions as the Proton acceptor in the catalytic mechanism. Glyoxylate contacts are provided by residues Arg339, Glu431, and 456–459; that span reads GFLD. 2 residues coordinate Mg(2+): Glu431 and Asp459. An acetyl-CoA-binding site is contributed by Pro540. Cys616 is subject to Cysteine sulfenic acid (-SOH). Asp630 acts as the Proton donor in catalysis.

This sequence belongs to the malate synthase family. GlcB subfamily. As to quaternary structure, monomer. Requires Mg(2+) as cofactor.

It is found in the cytoplasm. It carries out the reaction glyoxylate + acetyl-CoA + H2O = (S)-malate + CoA + H(+). The protein operates within carbohydrate metabolism; glyoxylate cycle; (S)-malate from isocitrate: step 2/2. Involved in the glycolate utilization. Catalyzes the condensation and subsequent hydrolysis of acetyl-coenzyme A (acetyl-CoA) and glyoxylate to form malate and CoA. This is Malate synthase G from Halalkalibacterium halodurans (strain ATCC BAA-125 / DSM 18197 / FERM 7344 / JCM 9153 / C-125) (Bacillus halodurans).